The following is a 469-amino-acid chain: Cysteine--tRNA ligase (469 aa).

Residue Cys-29 coordinates Zn(2+). The 'HIGH' region motif lies at 31-41; it reads PTVYNYIHIGN. Cys-210, His-235, and Glu-239 together coordinate Zn(2+). A 'KMSKS' region motif is present at residues 267 to 271; sequence KMSKS. Lys-270 contributes to the ATP binding site.

It belongs to the class-I aminoacyl-tRNA synthetase family. As to quaternary structure, monomer. Zn(2+) serves as cofactor.

It localises to the cytoplasm. The enzyme catalyses tRNA(Cys) + L-cysteine + ATP = L-cysteinyl-tRNA(Cys) + AMP + diphosphate. In Thermosipho africanus (strain TCF52B), this protein is Cysteine--tRNA ligase.